Here is a 204-residue protein sequence, read N- to C-terminus: Putative peroxiredoxin ycf42 (204 aa).

Residues 5 to 163 form the Thioredoxin domain; sequence PKIGKTPPNF…LLRILESIQY (159 aa).

This sequence belongs to the peroxiredoxin family. AhpC/Prx1 subfamily.

The protein localises to the plastid. Its subcellular location is the chloroplast. It catalyses the reaction a hydroperoxide + [protein]-dithiol = [protein]-disulfide + an alcohol + H2O. The protein is Putative peroxiredoxin ycf42 (ycf42) of Trieres chinensis (Marine centric diatom).